We begin with the raw amino-acid sequence, 279 residues long: Beta-porphyranase E (279 aa).

Residues 1–18 form the signal peptide; sequence MGNTMLLTLLLVVVAAYG. Residues 19–277 enclose the GH16 domain; that stretch reads QTPPPPEGFR…WVRSYTLLPV (259 aa). Positions 56, 60, 141, 146, and 243 each coordinate substrate. Residue glutamate 141 is the Nucleophile of the active site. Glutamate 146 serves as the catalytic Proton donor.

Belongs to the glycosyl hydrolase 16 family.

The protein resides in the periplasm. The catalysed reaction is Hydrolysis of beta-D-galactopyranose-(1-&gt;4)-alpha-L-galactopyranose-6-sulfate linkages in porphyran.. Its function is as follows. Cleaves the sulfated polysaccharide porphyran at the (1-&gt;4) linkages between beta-D-galactopyranose and alpha-L-galactopyranose-6-sulfate, forming mostly the disaccharide alpha-L-galactopyranose-6-sulfate-(1-&gt;3)-beta-D-galactose. The polypeptide is Beta-porphyranase E (porE) (Zobellia galactanivorans (strain DSM 12802 / CCUG 47099 / CIP 106680 / NCIMB 13871 / Dsij)).